We begin with the raw amino-acid sequence, 393 residues long: Formate-dependent phosphoribosylglycinamide formyltransferase (393 aa).

N(1)-(5-phospho-beta-D-ribosyl)glycinamide is bound by residues 22–23 (EL) and E82. Residues R114, K155, 160–165 (SSGHGQ), 195–198 (EGFI), and E203 contribute to the ATP site. Residues 119–308 (RLAAEELGLK…QFALHARAIL (190 aa)) form the ATP-grasp domain. Positions 267 and 279 each coordinate Mg(2+). N(1)-(5-phospho-beta-D-ribosyl)glycinamide-binding positions include D286, K356, and 363-364 (RR).

The protein belongs to the PurK/PurT family. In terms of assembly, homodimer.

The enzyme catalyses N(1)-(5-phospho-beta-D-ribosyl)glycinamide + formate + ATP = N(2)-formyl-N(1)-(5-phospho-beta-D-ribosyl)glycinamide + ADP + phosphate + H(+). Its pathway is purine metabolism; IMP biosynthesis via de novo pathway; N(2)-formyl-N(1)-(5-phospho-D-ribosyl)glycinamide from N(1)-(5-phospho-D-ribosyl)glycinamide (formate route): step 1/1. Its function is as follows. Involved in the de novo purine biosynthesis. Catalyzes the transfer of formate to 5-phospho-ribosyl-glycinamide (GAR), producing 5-phospho-ribosyl-N-formylglycinamide (FGAR). Formate is provided by PurU via hydrolysis of 10-formyl-tetrahydrofolate. This is Formate-dependent phosphoribosylglycinamide formyltransferase from Actinobacillus pleuropneumoniae serotype 5b (strain L20).